The sequence spans 323 residues: MTRSTRQRERETAAKQEEEEDSEEGVRECPECGSDNLVKSSDRAELVCNDCGLVVEEEQIDPGPEWRAFNHQERQEKSRVGAPTTQTMHDKGLTTTIDWKDKDAYGRSISSKKRSQMHRLRKWQERIRTKDAGERNLQFALSEIDRMASALGVPRSVREVASVIYRRALKEDLIRGRSIEGVATSALYAACRKEGIPRSLEEISEVSRVERKEIGRTYRYISQELGLEMKPVDPKKYVPRFCSELELTEEVQSKANEIIETTAEEGLLSGKSPTGYAAAAIYAASLLCNEKKTQREVADVAQVTEVTIRNRYQEQIEAMGIHG.

Positions methionine 1–glutamine 16 are enriched in basic and acidic residues. The segment at methionine 1–aspartate 35 is disordered. A TFIIB-type zinc finger spans residues glutamate 24 to glutamate 56. 4 residues coordinate Zn(2+): cysteine 29, cysteine 32, cysteine 48, and cysteine 51. 2 consecutive repeat copies span residues serine 142–leucine 225 and lysine 236–glutamate 317.

This sequence belongs to the TFIIB family.

In terms of biological role, stabilizes TBP binding to an archaeal box-A promoter. Also responsible for recruiting RNA polymerase II to the pre-initiation complex (DNA-TBP-TFIIB). The polypeptide is Transcription initiation factor IIB 7 (Halobacterium salinarum (strain ATCC 700922 / JCM 11081 / NRC-1) (Halobacterium halobium)).